Consider the following 508-residue polypeptide: MDEFHXYGKEDSSWQQCFLYPLFFQEDLYAIYHDHYLDGSSSSESMEHLSSNDQFSFLTVKRLIGQIRQQNNSIVFFLNCDPNPLVDRNKSFYYESVLEGLTLVLEVPFSIRSKYSVEGMNEWKSFRSIHSIFPFLEDKFPHSNYILDTRIPYSIHPEILVRTFRRWIRDAPSLHPLRSVLYKYRNSPDNLQRSIIIAPRVNTRFLLFLWNHYVYGCESILVPLLKQSFHPRSSSHGSFPDRTHFDRKIKHIIRNSRRNSLKSIWSLKDPRIHYVRYAERSIIAIKGTHLLVKKCRYHLPIFRQFYFHLWSEPYRVCSHQLSKNCSSSLGYFLRVRMKPLLVRTKMLDELFITDLITDEFDPIVPIVPIIGLLAREKLCDISGRPISKLYWTSLTDDDILDRFDRIWKNIFHYYSGSLDRDGLYRIKYILSLSCAKTLACKHKSTIRVVRKELGPELFKKYFSKEREFDFPAFSSKAAARSQRERIWHSDIPQINPLANSWQKIQDLK.

The protein belongs to the intron maturase 2 family. MatK subfamily.

Its subcellular location is the plastid. The protein resides in the chloroplast. Its function is as follows. Usually encoded in the trnK tRNA gene intron. Probably assists in splicing its own and other chloroplast group II introns. The sequence is that of Maturase K from Abies bracteata (Bristle-cone fir).